The sequence spans 658 residues: UvrABC system protein B (658 aa).

One can recognise a Helicase ATP-binding domain in the interval 26-413 (EGINSGKKKQ…SPEVIEQIIR (388 aa)). 39 to 46 (GATGTGKT) contributes to the ATP binding site. Residues 92 to 115 (YYDYYQPEAYVPQTDTFIEKDAQI) carry the Beta-hairpin motif. The 167-residue stretch at 430 to 596 (QIDDLLGEIQ…TIQKGVRDVI (167 aa)) folds into the Helicase C-terminal domain. The UVR domain maps to 622 to 657 (EKTIAKMEAEMKEAAKALDFERAAELRDLLLELKAE).

The protein belongs to the UvrB family. As to quaternary structure, forms a heterotetramer with UvrA during the search for lesions. Interacts with UvrC in an incision complex.

The protein localises to the cytoplasm. Its function is as follows. The UvrABC repair system catalyzes the recognition and processing of DNA lesions. A damage recognition complex composed of 2 UvrA and 2 UvrB subunits scans DNA for abnormalities. Upon binding of the UvrA(2)B(2) complex to a putative damaged site, the DNA wraps around one UvrB monomer. DNA wrap is dependent on ATP binding by UvrB and probably causes local melting of the DNA helix, facilitating insertion of UvrB beta-hairpin between the DNA strands. Then UvrB probes one DNA strand for the presence of a lesion. If a lesion is found the UvrA subunits dissociate and the UvrB-DNA preincision complex is formed. This complex is subsequently bound by UvrC and the second UvrB is released. If no lesion is found, the DNA wraps around the other UvrB subunit that will check the other stand for damage. The sequence is that of UvrABC system protein B from Bacillus cereus (strain ATCC 14579 / DSM 31 / CCUG 7414 / JCM 2152 / NBRC 15305 / NCIMB 9373 / NCTC 2599 / NRRL B-3711).